The chain runs to 288 residues: Type II restriction enzyme DpnII (288 aa).

The protein belongs to the DpnII type II restriction endonuclease family. In terms of assembly, homodimer.

The catalysed reaction is Endonucleolytic cleavage of DNA to give specific double-stranded fragments with terminal 5'-phosphates.. Its function is as follows. A P subtype restriction enzyme that recognizes the double-stranded unmethylated sequence 5'-GATC-3' and cleaves before G-1. The polypeptide is Type II restriction enzyme DpnII (Streptococcus pneumoniae).